The sequence spans 212 residues: Protein-L-isoaspartate O-methyltransferase (212 aa).

Residue Ser-60 is part of the active site.

The protein belongs to the methyltransferase superfamily. L-isoaspartyl/D-aspartyl protein methyltransferase family.

The protein resides in the cytoplasm. The enzyme catalyses [protein]-L-isoaspartate + S-adenosyl-L-methionine = [protein]-L-isoaspartate alpha-methyl ester + S-adenosyl-L-homocysteine. In terms of biological role, catalyzes the methyl esterification of L-isoaspartyl residues in peptides and proteins that result from spontaneous decomposition of normal L-aspartyl and L-asparaginyl residues. It plays a role in the repair and/or degradation of damaged proteins. This Methanococcus maripaludis (strain C6 / ATCC BAA-1332) protein is Protein-L-isoaspartate O-methyltransferase.